A 107-amino-acid chain; its full sequence is Pro-corazonin (107 aa).

The N-terminal stretch at 1–21 (MVNSQILILFILSLTITIVMC) is a signal peptide. Q22 carries the pyrrolidone carboxylic acid modification. The residue at position 32 (N32) is an Asparagine amide. Positions 88-107 (SFSENMINDHRQPAPTNNNY) are excised as a propeptide.

This sequence belongs to the corazonin family. In the adult brain, expressed in four neurons of the lateral protocerebrum project axons towards the retrocerebral complex.

The protein localises to the secreted. Its function is as follows. Cardioactive peptide. Corazonin is probably involved in the physiological regulation of the heart beat. This is Pro-corazonin from Apis mellifera (Honeybee).